A 172-amino-acid polypeptide reads, in one-letter code: Lytic chitin monooxygenase (172 aa).

An N-terminal signal peptide occupies residues 1–30; that stretch reads MHAGRKTAVLIGAALAPVIAVSLPAASASA. Residues histidine 31 and histidine 106 each contribute to the Cu cation site. Residues 31-168 enclose the Chitin-binding type-4 domain; sequence HGYISNPPSR…DNAFYACIDV (138 aa).

The cofactor is Cu(2+).

It is found in the secreted. The enzyme catalyses [(1-&gt;4)-N-acetyl-beta-D-glucosaminyl]n+m + reduced acceptor + O2 = [(1-&gt;4)-N-acetyl-beta-D-glucosaminyl]m-1-(1-&gt;4)-2-(acetylamino)-2-deoxy-D-glucono-1,5-lactone + [(1-&gt;4)-N-acetyl-beta-D-glucosaminyl]n + acceptor + H2O.. It functions in the pathway glycan degradation; chitin degradation. In terms of biological role, involved in chitin degradation. Catalyzes the oxidative cleavage of glycosidic bonds in chitin via a copper-dependent mechanism, leading to oxidized chitooligomers with degrees of polymerization of 4-6. Is not active on cellulose. This is Lytic chitin monooxygenase from Streptomyces ambofaciens (strain ATCC 23877 / 3486 / DSM 40053 / JCM 4204 / NBRC 12836 / NRRL B-2516).